A 377-amino-acid chain; its full sequence is Putative F-box protein At3g13830 (377 aa).

In terms of domain architecture, F-box spans 6–52 (TTTMSTLPMVLVDEILSRVPITSLRSLRSTCKRWEAQSKTNLVGGKA).

The chain is Putative F-box protein At3g13830 from Arabidopsis thaliana (Mouse-ear cress).